The following is a 977-amino-acid chain: MTIKRNGYNEYISMSSNSSPLLLYDIISLTNGSNDNEIIINFRSHVLNSNIIELLSGAAPHYFDVRNILVRNMESQKIGASFTINSITFVSEYMQYFVLNGNENLPNVYIDERGVVAYRKVWRRFTLGSPMFVFDYDGKLVKFTIAVERAKEGITVSSILHTRVRILDANSEDDIAFISEAIVTMMIYYKNSELEISQYYAENLYDELPRVRVLRDSKRIRNKTARRIRTTSINDIRTVIPVNNYARQCNRLPMLVDSIDDVPTELRGNTIKFPLHGEGGIDKPKYVYCRYSDAPYPGMMVNNLAGASKKFPYLPCCYKTSQEVKDVNLAYSRDVMPEVSSVAPNRVQIYFNTQRLLPCNSFGRSPMCIEKFITGINYFDDRLHDDDDNDSVSEYYPTISKVTDDVNASTYYCIRGGVQKGPNSIIEAVLRSLQYLDGRDPRTLSITDSILNSERLKLRDCINVSAQELYDIPFDKRLDILSSTQTYLDGFRFVKALQYQYDVNIYIYSRNCGPVTRFIYNHNEISLKFEDNDNINKQQQQQRERNDDDDDDDDSTLVLPYHNKSSAYIDTKIHRKSIVIYIHHGTEATTNATGYPHVEYIMFRKHKKVVEKLWDVYKAMLPVNITNVYGLSYYEADNDDINETISKRVAENCRKKLYVSTGKLLKLVGENNDGDDDDSFIPKLQVLDRLGKCVQLDEYRISSLSDFIEPLPLPIVNENMFYNNPSCLTQCYGFDAAFKVDRLSRLLLYITLYEMTLTGSITSVYFTINRQRFSELICDSGCVGKLLNNGCVTLQKYTHHLVSRTTTTTTTISPSISQEDHENNIDDSNITYILVDSSDTAKRLKYNATLLIKRMTAKEIDNLKLSTHVLPLLRYERDFALSNTSHDNMVVVTSMDKFTTKSFDHRYIYKIPSTIIPNIGESLVLITNESKEQTELVTVTSIENFTRIHDHYENSDAIQFKCVVNVWSGASTWKKSV.

The segment at 531–556 is disordered; it reads DNDNINKQQQQQRERNDDDDDDDDST.

Belongs to the ascovirus HvAV ORF146 family.

The protein localises to the virion. This chain is Structural protein ORF43, found in Noctuidae (owlet moths).